The primary structure comprises 86 residues: Small ribosomal subunit protein bS16 (86 aa).

It belongs to the bacterial ribosomal protein bS16 family.

The protein is Small ribosomal subunit protein bS16 of Xylella fastidiosa (strain 9a5c).